A 531-amino-acid chain; its full sequence is UDP-glucuronosyltransferase 1A7 (531 aa).

Residues 1–25 (MAPADFPASLPLCVCLLLASGLAQA) form the signal peptide. N-linked (GlcNAc...) asparagine glycans are attached at residues Asn-293 and Asn-431. A helical transmembrane segment spans residues 489–509 (VIGFLLAIVLTVVFIVFKCCA).

It belongs to the UDP-glycosyltransferase family. As to quaternary structure, homodimer. Homooligomer. Interacts with UGT1A1, UGT1A3, UGT1A4, UGT1A6, UGT1A8, UGT1A9 and UGT1A10 to form heterodimers. In terms of tissue distribution, widely expressed with highest levels detected in colon and kidney.

It localises to the endoplasmic reticulum membrane. It catalyses the reaction glucuronate acceptor + UDP-alpha-D-glucuronate = acceptor beta-D-glucuronoside + UDP + H(+). It carries out the reaction 17alpha-estradiol + UDP-alpha-D-glucuronate = 17alpha-estradiol 3-O-(beta-D-glucuronate) + UDP + H(+). The catalysed reaction is prunetin + UDP-alpha-D-glucuronate = prunetin-5-O-beta-D-glucuronide + UDP. The enzyme catalyses 5-epi-5-F2t-IsoP + UDP-alpha-D-glucuronate = 5-epi-5-F2t-IsoP-glucuronide + UDP + H(+). It catalyses the reaction (E)-ferulate + UDP-alpha-D-glucuronate = (E)-ferulic acid beta-D-glucuronate ester + UDP. It carries out the reaction candesartan + UDP-alpha-D-glucuronate = candesartan O-beta-D-glucuronoside + UDP. The catalysed reaction is SN-38 + UDP-alpha-D-glucuronate = SN-38 O-beta-D-glucuronide + UDP + H(+). The enzyme catalyses mycophenolate + UDP-alpha-D-glucuronate = mycophenolate 7-O-beta-D-glucuronide + UDP + H(+). In terms of biological role, UDP-glucuronosyltransferase (UGT) that catalyzes phase II biotransformation reactions in which lipophilic substrates are conjugated with glucuronic acid to increase the metabolite's water solubility, thereby facilitating excretion into either the urine or bile. Essential for the elimination and detoxification of drugs, xenobiotics and endogenous compounds. Catalyzes the glucuronidation of endogenous estrogen hormone epiestradiol. Involved in the glucuronidation of F2-isoprostane (5-epi-5-F2t-IsoP). Involved in the glucuronidation of the phytochemical ferulic acid at the carboxylic acid group. Also catalyzes the glucuronidation of the isoflavones genistein, daidzein, glycitein, formononetin, biochanin A and prunetin, which are phytoestrogens with anticancer and cardiovascular properties. Involved in the glucuronidation of the AGTR1 angiotensin receptor antagonist caderastan, a drug which can inhibit the effect of angiotensin II. Involved in the biotransformation of 7-ethyl-10-hydroxycamptothecin (SN-38), the pharmacologically active metabolite of the anticancer drug irinotecan. Also metabolizes mycophenolate, an immunosuppressive agent. The polypeptide is UDP-glucuronosyltransferase 1A7 (Mus musculus (Mouse)).